A 323-amino-acid polypeptide reads, in one-letter code: tRNA U34 carboxymethyltransferase (323 aa).

Carboxy-S-adenosyl-L-methionine is bound by residues Lys91, Trp105, Lys110, Gly130, Asp152–Thr154, Ile181–Glu182, Met196, Tyr200, and Arg315.

The protein belongs to the class I-like SAM-binding methyltransferase superfamily. CmoB family. In terms of assembly, homotetramer.

The catalysed reaction is carboxy-S-adenosyl-L-methionine + 5-hydroxyuridine(34) in tRNA = 5-carboxymethoxyuridine(34) in tRNA + S-adenosyl-L-homocysteine + H(+). In terms of biological role, catalyzes carboxymethyl transfer from carboxy-S-adenosyl-L-methionine (Cx-SAM) to 5-hydroxyuridine (ho5U) to form 5-carboxymethoxyuridine (cmo5U) at position 34 in tRNAs. This is tRNA U34 carboxymethyltransferase from Shigella flexneri serotype 5b (strain 8401).